Reading from the N-terminus, the 311-residue chain is E3 ubiquitin-protein ligase RNF126 (311 aa).

Residues C13, C16, C29, and C32 each coordinate Zn(2+). The C4-type zinc finger occupies 13–32 (CHSCTAEIIPRLPEYTCPRC). Disordered regions lie at residues 42–62 (ETRNSENNSSNNSGTDQNRPS) and 95–133 (GTSGPVEEPRDGESRREHQSRQRYGARQPRARLSTRRAA). Over residues 101-114 (EEPRDGESRREHQS) the composition is skewed to basic and acidic residues. Basic residues predominate over residues 123-133 (PRARLSTRRAA). The segment at 227–268 (CPVCKEDYTVGESVRQLPCNHLFHNDCIIPWLEQHDTCPVCR) adopts an RING-type zinc-finger fold. Positions 274–311 (QNTATNPPGLTEMTFSSSSTSSSSSTSPTDENNAANNS) are disordered. The span at 289–300 (SSSSTSSSSSTS) shows a compositional bias: low complexity. Over residues 301-311 (PTDENNAANNS) the composition is skewed to polar residues.

The protein localises to the cytoplasm. It is found in the nucleus. It catalyses the reaction S-ubiquitinyl-[E2 ubiquitin-conjugating enzyme]-L-cysteine + [acceptor protein]-L-lysine = [E2 ubiquitin-conjugating enzyme]-L-cysteine + N(6)-ubiquitinyl-[acceptor protein]-L-lysine.. It functions in the pathway protein modification; protein ubiquitination. E3 ubiquitin-protein ligase that mediates ubiquitination oF target proteins. Depending on the associated E2 ligase, mediates 'Lys-27'-, 'Lys-29'-, 'Lys-48'- and/or 'Lys-63'-linked polyubiquitination of substrates. Part of a BAG6-dependent quality control process ensuring that proteins of the secretory pathway that are mislocalized to the cytosol are degraded by the proteasome. Probably acts by providing the ubiquitin ligase activity associated with the BAG6 complex and be responsible for ubiquitination of the hydrophobic mislocalized proteins and their targeting to the proteasome. The chain is E3 ubiquitin-protein ligase RNF126 from Xenopus tropicalis (Western clawed frog).